The chain runs to 1037 residues: Sodium/potassium exporting P-type ATPase cta3 (1037 aa).

At 1-61 (MVTINISNPV…GVSAWKVLLR (61 aa)) the chain is on the cytoplasmic side. Residues 62–82 (QVLNAMCVVLILAAALSFGTT) traverse the membrane as a helical segment. A topological domain (extracellular) is located at residue Asp83. A helical membrane pass occupies residues 84–104 (WIEGGVISAIIVLNITVGFIQ). Over 105–281 (EYKAEKTMDS…LNVGTPLQRK (177 aa)) the chain is Cytoplasmic. The chain crosses the membrane as a helical span at residues 282–302 (LTVLAYILFCIAIILAIIVMA). At 303 to 313 (AHSFHVTNEVS) the chain is on the extracellular side. A helical transmembrane segment spans residues 314–334 (IYAISLGISIIPESLIAVLSI). Residues 335 to 760 (TMAMGQKNMS…GRRMFDNIMR (426 aa)) are Cytoplasmic-facing. Catalysis depends on Asp368, which acts as the 4-aspartylphosphate intermediate. 2 residues coordinate Mg(2+): Asp368 and Thr370. ATP is bound by residues Thr370, Glu468, Lys520, Arg559, Thr620, Gly621, Asp622, Arg678, and Lys684. Asp703 provides a ligand contact to Mg(2+). Asn706 serves as a coordination point for ATP. Residues 761–781 (FVLHLLVSNVGEVILLVVGLA) form a helical membrane-spanning segment. At 782–787 (FRDEVH) the chain is on the extracellular side. Residues 788–808 (LSVFPMSPVEILWCNMITSSF) traverse the membrane as a helical segment. The Cytoplasmic segment spans residues 809-844 (PSMGLGMELAQPDVMERLPHDNKVGIFQKSLIVDMM). The chain crosses the membrane as a helical span at residues 845–865 (VYGFFLGVVSLMTWVVIMYGF). Topologically, residues 866-889 (GTGNLSYDCNAHYHAGCNDVFKAR) are extracellular. Asn869 is a glycosylation site (N-linked (GlcNAc...) asparagine). The helical transmembrane segment at 890–910 (SAVFAVVTFCILIMAVEVKNF) threads the bilayer. Topologically, residues 911–939 (DNSLFNLHGIPWGEWNFRYFLHTLVENKF) are cytoplasmic. Residues 940–960 (LAWAIALAAVSVFPTIYIPVI) form a helical membrane-spanning segment. At 961-969 (NRDVFKHTY) the chain is on the extracellular side. Residues 970–990 (IGWEWGVVAVAVMFYFFYVEI) form a helical membrane-spanning segment. Over 991-1037 (WKSIRRSLTNPQKKGKFRRTLSNTITTESKLSEKDLEHRLFLQSRRA) the chain is Cytoplasmic. Ser1012 carries the post-translational modification Phosphoserine.

This sequence belongs to the cation transport ATPase (P-type) (TC 3.A.3) family. Type IID subfamily. Mg(2+) is required as a cofactor. Post-translationally, the active site is phosphorylated in presence of sodium or potassium and in conditions of higher pH. Not phosphorylated in presence of calcium ions.

It localises to the cell membrane. The enzyme catalyses Na(+)(in) + ATP + H2O = Na(+)(out) + ADP + phosphate + H(+). It carries out the reaction K(+)(in) + ATP + H2O = K(+)(out) + ADP + phosphate + H(+). Catalyzes the hydrolysis of ATP coupled with the export of sodium and potassium from the cell. May export sodium less efficiently. May transport other cations such as lithium. Sodium/potassium efflux ATPases are involved in salt tolerance and maintaining the membrane potential across the plasma membrane in high salinity (Na+) or alkaline (K+) environments. This Schizosaccharomyces pombe (strain 972 / ATCC 24843) (Fission yeast) protein is Sodium/potassium exporting P-type ATPase cta3.